Here is a 62-residue protein sequence, read N- to C-terminus: MKAKEIREMGADEIRRKIDDSTQEMFNLRFQHATGQLENTARLNKTKKEVARLKTILKEVEQ.

Belongs to the universal ribosomal protein uL29 family.

The chain is Large ribosomal subunit protein uL29 from Desulfatibacillum aliphaticivorans.